A 1489-amino-acid chain; its full sequence is MALPEANMSSTRSEQSSRSHDTIVGNEQPHSEKPAASAPGDQMSSDDEDEGPQTEEMIRRHSIVRDLARNYTNTSHHFTGSSADLFNAADANSPLNPSSENFNARAWARAMAKTMGENGSGFRQSGLCFQDMNVFGYGAETDYQKDVGNVWLGLPDMVHQMISPNANKRRIDILRGFDGVINAGEMCVVLGPPGSGCSTFLKSISGETNGIYIDDSTYFNYNGIPAEEMHKSHAGETIYTAEVDIHFPMLSVGDTLTFAARARCPQNLPPGIDHNLYSEHMRDVVMAMYGISHTINTQVGDNYIRGVSGGERKRVTIAEATLSNAPFQCWDNSTRGLDSANAIEFCKTLRLQSELFGQTCAVSIYQAPQTAYDLFDKALVIYEGRQIFFGPADEAKAYFINLGFECPDRQTTPDFLTSMTAPSERVVRPGWENKVPRTPDEFHARWKESQQYQIVRAEIESYKSLYPLNGSSADAFRENKHSAQAKGQRLKSPFTLSYMQQVQLCLWRGFRRLLGSPGVTIFQLIANTAVAFIASSLFYNMKPETGDFFKRGATLFLAVLSNAFASALEILTQYSQRPIVEKQARYAFYHPSAEAFASILVDMPYKITNSILFNVTLYFMTNLNRDAGAFFFFLLVSFIMVLAMSGVFRSIASLSRTLSQAMVPASLLILALVIFAGFVVPVDYMLGWCRWINYLDPVAYGFESLMVNEFSGRNFTCTAFVPNAQIPGYADVGGLNRACSTVGAIPGQSYVNGDAYINLEYKYFHAHKWRNVGILIAMTIFNHVVYIVATEFISAKKSKGEVLVFRRSNMPSKAKSDPEASSSRPIPTTEKNNNEVANIQGSTSVFHWNDVCYDIKIKGEPRRILDHVDGWVKPGTLTALMGVSGAGKTTLLDCLADRISMGVITGEMLVDGKIRDSSFQRRTGYVQQQDLHLETSTVREALTFSALLRQPASTPREEKIAYVDEVIKLLDMQEYADAVVGVLGEGLNVEQRKRLTIGVELAAKPPLLLFVDEPTSGLDSQTSWAILDLLEKLSKAGQSILCTIHQPSAMLFQRFDRLLFLAKGGRTIYFGDIGKNSETLTNYFVKHGSQECPNGENPAEWMLEVIGAAPGSHTDIDWHQTWRDSSEYQAVQTELQRLKAEGSANSVDQKSDPESYREFAAPFGQQLLIATKRVFEQYWRTPSYIYSKAALCIQVGLFLGLVFLNAPLSLRGLQNQMFAIFQMLTVFGQLVQMQMPHFVTQRSLYEVRERPSKTYSWKVFMLSQIIAEIPWNTLMSVFLFVCIYYPVGFNKNAEFAGQTAERGGLMWLLIWQFLIFTCTFAHAAIAITDTAEAGGNLANVVFMMSLFFCGVLAAPDKMPGFWIWMYRVSPFTYLVSAILSTGIANAEVKCAANELTTFNPTNGTTCGEYMDSYIKAAGGYLTNPDATSDCKFCTIKSTNVYLKALSASYDDRWRNFGIGMVYIVVNIVGALFLYWLIRMPKNKNKKKTA.

Residues 1–55 (MALPEANMSSTRSEQSSRSHDTIVGNEQPHSEKPAASAPGDQMSSDDEDEGPQTE) are disordered. Asn7 carries N-linked (GlcNAc...) asparagine glycosylation. The segment covering 44-53 (SSDDEDEGPQ) has biased composition (acidic residues). 5 N-linked (GlcNAc...) asparagine glycosylation sites follow: Asn70, Asn73, Asn118, Asn332, and Asn469. Residues 152–408 (LGLPDMVHQM…FINLGFECPD (257 aa)) enclose the ABC transporter 1 domain. 5 consecutive transmembrane segments (helical) span residues 513 to 533 (LLGS…VAFI), 552 to 572 (GATL…EILT), 599 to 619 (ILVD…TLYF), 628 to 648 (GAFF…SGVF), and 662 to 682 (MVPA…VVPV). Asn714 carries an N-linked (GlcNAc...) asparagine glycan. The chain crosses the membrane as a helical span at residues 773–793 (GILIAMTIFNHVVYIVATEFI). The segment at 811–834 (PSKAKSDPEASSSRPIPTTEKNNN) is disordered. Residues 819–834 (EASSSRPIPTTEKNNN) are compositionally biased toward polar residues. The 243-residue stretch at 846-1088 (FHWNDVCYDI…TLTNYFVKHG (243 aa)) folds into the ABC transporter 2 domain. Residue 882–889 (GVSGAGKT) participates in ATP binding. The next 5 membrane-spanning stretches (helical) occupy residues 1190–1210 (ALCI…PLSL), 1218–1238 (FAIF…MPHF), 1269–1289 (IPWN…PVGF), 1307–1327 (WLLI…AIAI), and 1333–1353 (AGGN…GVLA). Asn1402 carries an N-linked (GlcNAc...) asparagine glycan. A helical transmembrane segment spans residues 1457–1477 (GIGMVYIVVNIVGALFLYWLI).

This sequence belongs to the ABC transporter superfamily. ABCG family. PDR (TC 3.A.1.205) subfamily.

Its subcellular location is the cell membrane. The protein resides in the vacuole membrane. Its function is as follows. ABC transporter involved in zearalenone production. The sequence is that of ZEB2-regulated ABC transporter 1 from Gibberella zeae (strain ATCC MYA-4620 / CBS 123657 / FGSC 9075 / NRRL 31084 / PH-1) (Wheat head blight fungus).